The primary structure comprises 143 residues: Large ribosomal subunit protein uL11 (143 aa).

This sequence belongs to the universal ribosomal protein uL11 family. Part of the ribosomal stalk of the 50S ribosomal subunit. Interacts with L10 and the large rRNA to form the base of the stalk. L10 forms an elongated spine to which L12 dimers bind in a sequential fashion forming a multimeric L10(L12)X complex. In terms of processing, one or more lysine residues are methylated.

Functionally, forms part of the ribosomal stalk which helps the ribosome interact with GTP-bound translation factors. The chain is Large ribosomal subunit protein uL11 from Ectopseudomonas mendocina (strain ymp) (Pseudomonas mendocina).